Here is a 178-residue protein sequence, read N- to C-terminus: S-alkylcysteine N-acetyltransferase (178 aa).

One can recognise an N-acetyltransferase domain in the interval 4 to 163; it reads DIFRLATVED…IGVMMHKVLI (160 aa).

This sequence belongs to the acetyltransferase family.

The catalysed reaction is an S-substituted L-cysteine + acetyl-CoA = an N-acetyl-L-cysteine-S-conjugate + CoA + H(+). It carries out the reaction S-benzyl-L-cysteine + acetyl-CoA = N-acetyl-S-benzyl-L-cysteine + CoA + H(+). It catalyses the reaction S-methyl-L-cysteine + acetyl-CoA = N-acetyl-S-methyl-L-cysteine + CoA + H(+). Its pathway is amino-acid metabolism. Its function is as follows. Involved in a cysteine salvage pathway from S-alkylcysteine. Catalyzes the first step in this pathway, i.e. the amine acetylation of an S-alkylcysteine with a preference for S-benzyl-L-cysteine over S-methyl-L-cysteine. This pathway is likely important in the catabolism of alkylated cysteine generated by proteolysis of alkylated glutathione formed in the detoxification of a wide range of electrophiles. The sequence is that of S-alkylcysteine N-acetyltransferase from Bacillus subtilis (strain 168).